A 164-amino-acid polypeptide reads, in one-letter code: Ecotin (164 aa).

A signal peptide spans 1 to 20; that stretch reads MKMFVPAVVFAALASASAWA. Cysteines 72 and 109 form a disulfide.

Belongs to the protease inhibitor I11 (ecotin) family. As to quaternary structure, homodimer.

The protein localises to the periplasm. In terms of biological role, general inhibitor of pancreatic serine proteases: inhibits chymotrypsin, trypsin, elastases, factor X, kallikrein as well as a variety of other proteases. The sequence is that of Ecotin from Salmonella enteritidis PT4 (strain P125109).